Reading from the N-terminus, the 426-residue chain is Glutamate-1-semialdehyde 2,1-aminomutase (426 aa).

Lys265 carries the N6-(pyridoxal phosphate)lysine modification.

Belongs to the class-III pyridoxal-phosphate-dependent aminotransferase family. HemL subfamily. In terms of assembly, homodimer. Requires pyridoxal 5'-phosphate as cofactor.

It is found in the cytoplasm. It catalyses the reaction (S)-4-amino-5-oxopentanoate = 5-aminolevulinate. It functions in the pathway porphyrin-containing compound metabolism; protoporphyrin-IX biosynthesis; 5-aminolevulinate from L-glutamyl-tRNA(Glu): step 2/2. In Yersinia enterocolitica serotype O:8 / biotype 1B (strain NCTC 13174 / 8081), this protein is Glutamate-1-semialdehyde 2,1-aminomutase.